Consider the following 59-residue polypeptide: Large ribosomal subunit protein uL30 (59 aa).

It belongs to the universal ribosomal protein uL30 family. Part of the 50S ribosomal subunit.

The polypeptide is Large ribosomal subunit protein uL30 (Photobacterium profundum (strain SS9)).